The primary structure comprises 163 residues: Phosphopantetheine adenylyltransferase (163 aa).

Serine 9 provides a ligand contact to substrate. ATP-binding positions include 9-10 (SF) and histidine 17. The substrate site is built by lysine 41, isoleucine 75, and arginine 89. ATP-binding positions include 90-92 (GIR), glutamate 100, and 125-131 (HLYVRSD).

This sequence belongs to the bacterial CoaD family. In terms of assembly, homohexamer. The cofactor is Mg(2+).

The protein resides in the cytoplasm. The enzyme catalyses (R)-4'-phosphopantetheine + ATP + H(+) = 3'-dephospho-CoA + diphosphate. Its pathway is cofactor biosynthesis; coenzyme A biosynthesis; CoA from (R)-pantothenate: step 4/5. Its function is as follows. Reversibly transfers an adenylyl group from ATP to 4'-phosphopantetheine, yielding dephospho-CoA (dPCoA) and pyrophosphate. This is Phosphopantetheine adenylyltransferase from Borrelia garinii subsp. bavariensis (strain ATCC BAA-2496 / DSM 23469 / PBi) (Borreliella bavariensis).